The chain runs to 474 residues: tRNA-2-methylthio-N(6)-dimethylallyladenosine synthase (474 aa).

The 118-residue stretch at 3 to 120 folds into the MTTase N-terminal domain; sequence KKLHIKTWGC…LPEMINSVRG (118 aa). Positions 12, 49, 83, 157, 161, and 164 each coordinate [4Fe-4S] cluster. Residues 143 to 375 form the Radical SAM core domain; that stretch reads RAEGPTAFVS…QERINQQAMA (233 aa). Residues 378-441 form the TRAM domain; it reads RRMLGTTQRI…PNSLRGKVVR (64 aa).

It belongs to the methylthiotransferase family. MiaB subfamily. Monomer. Requires [4Fe-4S] cluster as cofactor.

It localises to the cytoplasm. The catalysed reaction is N(6)-dimethylallyladenosine(37) in tRNA + (sulfur carrier)-SH + AH2 + 2 S-adenosyl-L-methionine = 2-methylsulfanyl-N(6)-dimethylallyladenosine(37) in tRNA + (sulfur carrier)-H + 5'-deoxyadenosine + L-methionine + A + S-adenosyl-L-homocysteine + 2 H(+). Functionally, catalyzes the methylthiolation of N6-(dimethylallyl)adenosine (i(6)A), leading to the formation of 2-methylthio-N6-(dimethylallyl)adenosine (ms(2)i(6)A) at position 37 in tRNAs that read codons beginning with uridine. This is tRNA-2-methylthio-N(6)-dimethylallyladenosine synthase from Salmonella enteritidis PT4 (strain P125109).